Here is a 234-residue protein sequence, read N- to C-terminus: Proteasome subunit alpha type-2 (234 aa).

Belongs to the peptidase T1A family. As to quaternary structure, the 26S proteasome consists of a 20S proteasome core and two 19S regulatory subunits. The 20S proteasome core is composed of 28 subunits that are arranged in four stacked rings, resulting in a barrel-shaped structure. The two end rings are each formed by seven alpha subunits, and the two central rings are each formed by seven beta subunits. The catalytic chamber with the active sites is on the inside of the barrel. Interacts with Rpn6.

It localises to the cytoplasm. The protein localises to the nucleus. Functionally, the proteasome is a multicatalytic proteinase complex which is characterized by its ability to cleave peptides with Arg, Phe, Tyr, Leu, and Glu adjacent to the leaving group at neutral or slightly basic pH. The proteasome has an ATP-dependent proteolytic activity. This Drosophila melanogaster (Fruit fly) protein is Proteasome subunit alpha type-2 (Prosalpha2).